We begin with the raw amino-acid sequence, 652 residues long: Acetyl-coenzyme A synthetase (652 aa).

Residues 191–194 (RAGR), threonine 311, and asparagine 335 contribute to the CoA site. ATP is bound by residues 387–389 (GEP), 411–416 (DTWWQT), aspartate 500, and arginine 515. Residue serine 523 coordinates CoA. Position 526 (arginine 526) interacts with ATP. Positions 537, 539, and 542 each coordinate Mg(2+). Arginine 584 provides a ligand contact to CoA. The residue at position 609 (lysine 609) is an N6-acetyllysine.

Belongs to the ATP-dependent AMP-binding enzyme family. Requires Mg(2+) as cofactor. In terms of processing, acetylated. Deacetylation by the SIR2-homolog deacetylase activates the enzyme.

It catalyses the reaction acetate + ATP + CoA = acetyl-CoA + AMP + diphosphate. In terms of biological role, catalyzes the conversion of acetate into acetyl-CoA (AcCoA), an essential intermediate at the junction of anabolic and catabolic pathways. Acs undergoes a two-step reaction. In the first half reaction, Acs combines acetate with ATP to form acetyl-adenylate (AcAMP) intermediate. In the second half reaction, it can then transfer the acetyl group from AcAMP to the sulfhydryl group of CoA, forming the product AcCoA. Its function is as follows. Enables the cell to use acetate during aerobic growth to generate energy via the TCA cycle, and biosynthetic compounds via the glyoxylate shunt. Acetylates CheY, the response regulator involved in flagellar movement and chemotaxis. The sequence is that of Acetyl-coenzyme A synthetase from Salmonella typhi.